The sequence spans 428 residues: Pyruvate kinase (428 aa).

Residue Arg34 participates in substrate binding. K(+) is bound by residues Asn36, Ser38, Asp68, and Thr69. An ATP-binding site is contributed by 36 to 39; it reads NFSH. ATP is bound by residues Arg75 and Lys152. Glu214 is a Mg(2+) binding site. Substrate-binding residues include Gly237, Asp238, and Thr270. Asp238 is a Mg(2+) binding site.

Belongs to the pyruvate kinase family. In terms of assembly, homotetramer. Requires Mg(2+) as cofactor. The cofactor is K(+).

The enzyme catalyses pyruvate + ATP = phosphoenolpyruvate + ADP + H(+). The protein operates within carbohydrate degradation; glycolysis; pyruvate from D-glyceraldehyde 3-phosphate: step 5/5. This is Pyruvate kinase (PYK1) from Encephalitozoon cuniculi (strain GB-M1) (Microsporidian parasite).